The primary structure comprises 325 residues: MTRYSRITGTGSYLPPRRLTNAELAAELATKGVETSDEWIVERTGIRARHFAAPDVSSSDLAVKAARHALEAAGRQASDIDLIIVATSTPDMVFPSAACIVQNKLGIAGCPAFDVQAVCSGFVYALTVADALIKTGSATKALVIGAEVFSRILDFSDRTTCVLFGDGAGAVVLEASETPGILASDLHADGKHVGILCVPGNVSGGQVLGDPLLKMDGQAVFKLAVGVLESSARAALAKANLRDTDIDWLIPHQANIRIMQSTAKKLKVPPEKLIVTVDEHGNTSAASIPLALDASVRSGKVKKGDTLMLEGVGGGFTWGAVLLNY.

Residues Cys119 and His252 contribute to the active site. An ACP-binding region spans residues 253-257; it reads QANIR. The active site involves Asn282.

Belongs to the thiolase-like superfamily. FabH family. As to quaternary structure, homodimer.

It localises to the cytoplasm. It carries out the reaction malonyl-[ACP] + acetyl-CoA + H(+) = 3-oxobutanoyl-[ACP] + CO2 + CoA. It participates in lipid metabolism; fatty acid biosynthesis. In terms of biological role, catalyzes the condensation reaction of fatty acid synthesis by the addition to an acyl acceptor of two carbons from malonyl-ACP. Catalyzes the first condensation reaction which initiates fatty acid synthesis and may therefore play a role in governing the total rate of fatty acid production. Possesses both acetoacetyl-ACP synthase and acetyl transacylase activities. Its substrate specificity determines the biosynthesis of branched-chain and/or straight-chain of fatty acids. In Polaromonas sp. (strain JS666 / ATCC BAA-500), this protein is Beta-ketoacyl-[acyl-carrier-protein] synthase III.